Here is a 581-residue protein sequence, read N- to C-terminus: Activating signal cointegrator 1 (581 aa).

At Ala2 the chain carries N-acetylalanine. Positions Asp100 to Pro121 are disordered. Residues Gly167 to Asp219 form a C4-type zinc finger. The tract at residues Cys200–Lys300 is mediates interaction with DDRGK1. At Ser276 the chain carries Phosphoserine. Tyr289 carries the post-translational modification Phosphotyrosine. The segment at Lys300–Gln400 is mediates interaction with UFL1. Glycyl lysine isopeptide (Lys-Gly) (interchain with G-Cter in UFM1) cross-links involve residues Lys324 and Lys334. The span at Gln390 to Ser406 shows a compositional bias: polar residues. The segment at Gln390–Arg410 is disordered. The 95-residue stretch at Leu437–Gln531 folds into the ASCH domain.

Interacts with the thyroid hormone receptor/TR (via the ligand-binding domain); this interaction requires the presence of thyroid hormone. Interacts with the androgen receptor/AR; in an androgen, testosterone and dihydrotestosterone-dependent manner. Interacts with ESR1 (estrogen ligand-bound); competes with UFSP2. Interacts with UFSP2; competes with ligand-bound ESR1. Interacts with DDRGK1 and UFL1; the interaction with DDRGK1 is direct. Interacts with NCOA1. Interacts with EP300. Part of the ASC-1 complex, that contains TRIP4, ASCC1, ASCC2 and ASCC3. Identified in the RQT (ribosome quality control trigger) complex, that contains ASCC2, ASCC3 and TRIP4. Interacts with NEK6. Interacts with CSRP1. Interacts with ZCCHC4. Phosphorylated by NEK6. Post-translationally, polyufmylated by the UFM1-conjugating system composed of the enzymes UBA5, UFC1 and UFL1. Deufmylated by the protease UFSP2. Ufmylation of TRIP4 is promoted by ligand-bound nuclear receptors that compete with UFSP2 for interaction with TRIP4. Nuclear receptors-induced ufmylation promotes the recruitment of additional transcriptional coactivators like EP300 and NCOA1 and therefore the assembly of a coactivator complex facilitating nuclear receptor-mediated transcription. Ubiquitously expressed. Expressed in the spinal cord, brain, paraspinal ganglia, thyroid, and submandibular glands. Expressed at low level in all the muscles (at protein level) but with higher expression in axial than in limb muscles.

The protein resides in the nucleus. Its subcellular location is the cytoplasm. The protein localises to the cytosol. It is found in the cytoskeleton. It localises to the microtubule organizing center. The protein resides in the centrosome. Functionally, transcription coactivator which associates with nuclear receptors, transcriptional coactivators including EP300, CREBBP and NCOA1, and basal transcription factors like TBP and TFIIA to facilitate nuclear receptors-mediated transcription. May thereby play an important role in establishing distinct coactivator complexes under different cellular conditions. Plays a role in thyroid hormone receptor and estrogen receptor transactivation. Also involved in androgen receptor transactivation. Plays a pivotal role in the transactivation of NF-kappa-B, SRF and AP1. Acts as a mediator of transrepression between nuclear receptor and either AP1 or NF-kappa-B. May play a role in the development of neuromuscular junction. May play a role in late myogenic differentiation. Also functions as part of the RQC trigger (RQT) complex that activates the ribosome quality control (RQC) pathway, a pathway that degrades nascent peptide chains during problematic translation. This Mus musculus (Mouse) protein is Activating signal cointegrator 1.